Consider the following 418-residue polypeptide: Neurotensin receptor type 1 (418 aa).

At 1–67 (MRLNSSAPGT…TDIYSKVLVT (67 aa)) the chain is on the extracellular side. N-linked (GlcNAc...) asparagine glycans are attached at residues N4, N37, and N41. Residues 68-88 (AVYLALFVVGTVGNTVTAFTL) traverse the membrane as a helical segment. Residues 89 to 102 (ARKKSLQSLQSTVH) are Cytoplasmic-facing. Residues 103 to 122 (YHLGSLALSDLLTLLLAMPV) traverse the membrane as a helical segment. Topologically, residues 123-142 (ELYNFIWVHHPWAFGDAGCR) are extracellular. A disulfide bridge connects residues C141 and C224. The helical transmembrane segment at 143–164 (GYYFLRDACTYATALNVASLSV) threads the bilayer. Residues 165–184 (ERYLAICHPFKAKTLMSRSR) lie on the Cytoplasmic side of the membrane. The chain crosses the membrane as a helical span at residues 185 to 205 (TKKFISAIWLASALLAVPMLF). The Extracellular portion of the chain corresponds to 206–234 (TMGEQNRSADGQHAGGLVCTPTIHTATVK). A helical membrane pass occupies residues 235–259 (VVIQVNTFMSFIFPMVVISVLNTII). Over 260-303 (ANKLTVMVRQAAEQGQVCTVGGEHSTFSMAIEPGRVQALRHGVR) the chain is Cytoplasmic. Residues 304-325 (VLRAVVIAFVVCWLPYHVRRLM) form a helical membrane-spanning segment. The neurotensin binding stretch occupies residues 321–344 (VRRLMFCYISDEQWTPFLYDFYHY). The Extracellular segment spans residues 326-343 (FCYISDEQWTPFLYDFYH). The chain crosses the membrane as a helical span at residues 344–364 (YFYMVTNALFYVSSTINPILY). Residues 365–418 (NLVSANFRHIFLATLACLCPVWRRRRKRPAFSRKADSVSSNHTLSSNATRETLY) are Cytoplasmic-facing. S-palmitoyl cysteine attachment occurs at residues C381 and C383.

This sequence belongs to the G-protein coupled receptor 1 family. Neurotensin receptor subfamily. NTSR1 sub-subfamily. In terms of assembly, interacts (palmitoylated form) with GNA11. Post-translationally, N-glycosylated. In terms of processing, palmitoylated; this is required for normal localization at membrane rafts and normal GNA11-mediated activation of down-stream signaling cascades. The palmitoylation level increases in response to neurotensin treatment. In terms of tissue distribution, expressed in prostate (at protein level). Detected in colon and peripheral blood mononuclear cells. Detected at very low levels in brain.

The protein resides in the cell membrane. The protein localises to the membrane raft. Functionally, G-protein coupled receptor for the tridecapeptide neurotensin (NTS). Signaling is effected via G proteins that activate a phosphatidylinositol-calcium second messenger system. Signaling leads to the activation of downstream MAP kinases and protects cells against apoptosis. This Homo sapiens (Human) protein is Neurotensin receptor type 1 (NTSR1).